We begin with the raw amino-acid sequence, 547 residues long: Cdc42-interacting protein 4 (547 aa).

The segment at 1 to 117 (MDWGTELWDQ…EMKQERKMHF (117 aa)) is required for translocation to the plasma membrane in response to insulin, podosome formation and interaction with AKAP9 and microtubules. An F-BAR domain is found at 1–264 (MDWGTELWDQ…AAESVDAKND (264 aa)). Residues 67 to 259 (FSQQQSFVQL…EGMKVAAESV (193 aa)) are a coiled coil. The tract at residues 293–483 (RVPSDSSLGT…YTEFDEDFEE (191 aa)) is interaction with CDC42. The interaction with PDE6G stretch occupies residues 293–547 (RVPSDSSLGT…PTSYLRVTLN (255 aa)). The interval 294–323 (VPSDSSLGTPDGRPELRAASSRSRAKRWPF) is disordered. Phosphoserine is present on residues S296, S298, and S299. Residues 332–425 (TEDFSHLPPE…ESRVLSNRGD (94 aa)) are a coiled coil. One can recognise an REM-1 domain in the interval 337 to 414 (HLPPEQQRKR…VQKYEAWLAE (78 aa)). Residues 415–547 (AESRVLSNRG…PTSYLRVTLN (133 aa)) are required for interaction with FASLG and localization to lysosomes. A disordered region spans residues 420-485 (LSNRGDSLSR…EFDEDFEEPA (66 aa)). S426 carries the post-translational modification Phosphoserine. The interaction with DNM2 and WASL stretch occupies residues 431–487 (TRPPDPPTTAPPDSSSSSNNSGSQDNKESSEEPPSEEGQDTPIYTEFDEDFEEPASP). The span at 441–451 (PPDSSSSSNNS) shows a compositional bias: low complexity. The segment at 476–547 (EFDEDFEEPA…PTSYLRVTLN (72 aa)) is interaction with DNM1 and WASL. Residues 484 to 547 (PASPIGQCVA…PTSYLRVTLN (64 aa)) form a required for podosome formation region. An SH3 domain is found at 486–547 (SPIGQCVAIY…PTSYLRVTLN (62 aa)). The interaction with WAS stretch occupies residues 490–547 (QCVAIYHFEGSSEGTVSMSEGEDLSLMEEDKGDGWTRVRRKQGGEGYVPTSYLRVTLN). The interaction with ARHGAP17, DAAM1, DIAPH1 and DIAPH2 stretch occupies residues 492 to 547 (VAIYHFEGSSEGTVSMSEGEDLSLMEEDKGDGWTRVRRKQGGEGYVPTSYLRVTLN).

Belongs to the FNBP1 family. In terms of assembly, homodimerizes, the dimers can polymerize end-to-end to form filamentous structures. Interacts specifically with GTP-bound CDC42 and RHOQ. Interacts with AKAP9, ARHGAP17, DAAM1, DIAPH1, DIAPH2, DNM1, DNM2, FASLG/FASL, GAPVD1, LYN, microtubules, SRC, WAS/WASP and WASL/N-WASP. Interacts with the ligand binding domain of the thyroid receptor (TR) in the presence of thyroid hormone. May interact with CTNNB1 and HD/HTT. Interacts with PDE6G. As to expression, expressed in adrenal gland, aorta, brain, heart, kidney, liver, skeletal muscle and spleen.

It is found in the cytoplasm. The protein resides in the cytoskeleton. Its subcellular location is the cell cortex. The protein localises to the lysosome. It localises to the golgi apparatus. It is found in the cell membrane. The protein resides in the cell projection. Its subcellular location is the phagocytic cup. Its function is as follows. Required to coordinate membrane tubulation with reorganization of the actin cytoskeleton during endocytosis. Also acts as a link between CDC42 signaling and regulation of the actin cytoskeleton. Binds to lipids such as phosphatidylinositol 4,5-bisphosphate and phosphatidylserine and promotes membrane invagination and the formation of tubules. Also enhances actin polymerization in the vicinity of membrane tubules by recruiting WASL/N-WASP which in turn activates the Arp2/3 complex. Actin polymerization and dynamin may promote the fission of membrane tubules to form endocytic vesicles. Required for the formation of podosomes, actin-rich adhesion structures specific to monocyte-derived cells. Required for translocation of GLUT4 to the plasma membrane in response to insulin signaling. May be required for the lysosomal retention of FASLG/FASL. The protein is Cdc42-interacting protein 4 (Trip10) of Rattus norvegicus (Rat).